Consider the following 338-residue polypeptide: Glycerol-3-phosphate dehydrogenase [NAD(P)+] (338 aa).

NADPH contacts are provided by S13, W14, and K108. K108, G139, and S141 together coordinate sn-glycerol 3-phosphate. Position 143 (A143) interacts with NADPH. 5 residues coordinate sn-glycerol 3-phosphate: K194, D247, S257, R258, and N259. K194 functions as the Proton acceptor in the catalytic mechanism. Position 258 (R258) interacts with NADPH. V282 and E284 together coordinate NADPH.

The protein belongs to the NAD-dependent glycerol-3-phosphate dehydrogenase family.

The protein localises to the cytoplasm. The enzyme catalyses sn-glycerol 3-phosphate + NAD(+) = dihydroxyacetone phosphate + NADH + H(+). The catalysed reaction is sn-glycerol 3-phosphate + NADP(+) = dihydroxyacetone phosphate + NADPH + H(+). It functions in the pathway membrane lipid metabolism; glycerophospholipid metabolism. Catalyzes the reduction of the glycolytic intermediate dihydroxyacetone phosphate (DHAP) to sn-glycerol 3-phosphate (G3P), the key precursor for phospholipid synthesis. The protein is Glycerol-3-phosphate dehydrogenase [NAD(P)+] of Streptococcus pneumoniae (strain Taiwan19F-14).